The sequence spans 269 residues: GATA zinc finger domain-containing protein 1 (269 aa).

A GATA-type zinc finger spans residues 9–33 (CSVCKTTSSSMWKKGAQGEILCHHC). The tract at residues 63–115 (ATFASTSATPPQSNGGGGGKQSKQEIHRRSARLRNTKYKSAPAAEKKVSTKGK) is disordered. Lys262 is covalently cross-linked (Glycyl lysine isopeptide (Lys-Gly) (interchain with G-Cter in SUMO2)).

In terms of assembly, component of a chromatin complex, at least composed of KDM5A, GATAD1 and EMSY. In terms of tissue distribution, ubiquitously expressed among various tissue types. Expressed in left ventricular myocytes.

It is found in the nucleus. Component of some chromatin complex recruited to chromatin sites methylated 'Lys-4' of histone H3 (H3K4me), with a preference for trimethylated form (H3K4me3). The protein is GATA zinc finger domain-containing protein 1 (GATAD1) of Homo sapiens (Human).